The chain runs to 627 residues: F-box only protein 21 (627 aa).

Residues 27 to 76 (PSCLVQLPGEVLEYILCSGSLTALDIGRVSSTCRRLREVCQSSGQVWKEQ) enclose the F-box domain.

Directly interacts with SKP1 and CUL1.

Functionally, substrate-recognition component of the SCF (SKP1-CUL1-F-box protein)-type E3 ubiquitin ligase complex. In Mus musculus (Mouse), this protein is F-box only protein 21 (Fbxo21).